The following is a 412-amino-acid chain: MQTYLVGGAVRDRLLGLPQGDRDHLVVGATVEQMLALGFTQVGRDFPVFLHPKTQQEYALARTERKQGRGYTGFVCHASPEVTLEQDLLRRDLTVNAIAEDEAGQLHDPYGGIEDLKQRLLRHVSPAFAEDPLRILRVARFAARFHAQGFVVAPETLALMREMTEAGELAHLTPERVWKELEKVLLGPTPQVFFEVLRECGALAALFPELDALFGVPAPAKWHPEIDTGIHTMMVLAQACRLSPELAVRFAALCHDFGKGLTPPEFWPSHHGHGQKGLPLIRDFCERFRAPNECRDLALLVSDLHTHIHIAFELKPATLLKVFDKADAWRRPERFAQLLDACRADFHGRTGFEERVYAEPDYVARALAAAQAVPVKEIVAAGFKGEAIREQLAKRRLDAISRVRDEWTFLED.

Residues Gly8 and Arg11 each coordinate ATP. Residues Gly8 and Arg11 each coordinate CTP. Positions 21 and 23 each coordinate Mg(2+). Residues Arg91, Arg137, and Arg140 each contribute to the ATP site. CTP is bound by residues Arg91, Arg137, and Arg140. Residues 228-329 form the HD domain; it reads TGIHTMMVLA…LKVFDKADAW (102 aa).

It belongs to the tRNA nucleotidyltransferase/poly(A) polymerase family. Bacterial CCA-adding enzyme type 1 subfamily. Monomer. Can also form homodimers and oligomers. The cofactor is Mg(2+). Ni(2+) is required as a cofactor.

It catalyses the reaction a tRNA precursor + 2 CTP + ATP = a tRNA with a 3' CCA end + 3 diphosphate. It carries out the reaction a tRNA with a 3' CCA end + 2 CTP + ATP = a tRNA with a 3' CCACCA end + 3 diphosphate. Its function is as follows. Catalyzes the addition and repair of the essential 3'-terminal CCA sequence in tRNAs without using a nucleic acid template. Adds these three nucleotides in the order of C, C, and A to the tRNA nucleotide-73, using CTP and ATP as substrates and producing inorganic pyrophosphate. tRNA 3'-terminal CCA addition is required both for tRNA processing and repair. Also involved in tRNA surveillance by mediating tandem CCA addition to generate a CCACCA at the 3' terminus of unstable tRNAs. While stable tRNAs receive only 3'-terminal CCA, unstable tRNAs are marked with CCACCA and rapidly degraded. The polypeptide is Multifunctional CCA protein (Aeromonas hydrophila subsp. hydrophila (strain ATCC 7966 / DSM 30187 / BCRC 13018 / CCUG 14551 / JCM 1027 / KCTC 2358 / NCIMB 9240 / NCTC 8049)).